We begin with the raw amino-acid sequence, 327 residues long: Probable cell division protein WhiA (327 aa).

A DNA-binding region (H-T-H motif) is located at residues 275-308; the sequence is SLEELGRLADPPMTKDAVAGRIRRLLSMADRKAK.

It belongs to the WhiA family.

Involved in cell division and chromosome segregation. The protein is Probable cell division protein WhiA of Mycobacterium avium (strain 104).